The chain runs to 433 residues: Myricetin 3-O-glucosyl 1,2-rhamnoside 6'-O-caffeoyltransferase AT2 (433 aa).

Residues His157 and Asp375 each act as proton acceptor in the active site.

This sequence belongs to the plant acyltransferase family. As to expression, expressed in young cromes.

The catalysed reaction is myricetin 3-O-[beta-D-glucosyl-(1-&gt;2)-alpha-L-rhamnoside] + (E)-caffeoyl-CoA = myricetin 3-O-[(6-O-(E)-caffeoyl-beta-D-glucosyl)-(1-&gt;2)-alpha-L-rhamnoside] + CoA. It functions in the pathway flavonoid metabolism. Its function is as follows. Caffeoyltransferase involved in montbretin A (MbA) biosynthesis. Catalyzes the caffeoylation of myricetin 3-O-beta-D-glucosyl 1,2-alpha-L-rhamnoside (MRG) to produce myricetin 3-O-(6'-O-caffeoyl)-beta-D-glucosyl 1,2-alpha-L-rhamnoside (mini-MbA), a precursor of MbA. Mini-MbA and MbA are potent inhibitors of human pancreatic alpha-amylase and are being developed as drug candidates to treat type-2 diabetes. In vitro, is able to catalyze the caffeoylation of quercetin 3-O-sophoroside (QGG), although QGG may not be a physiological substrate in vivo. In vitro, can use coumaryl-CoA, feruloyl-CoA and acetyl-CoA, although these three acyl donors may not be physiological in vivo. The chain is Myricetin 3-O-glucosyl 1,2-rhamnoside 6'-O-caffeoyltransferase AT2 from Crocosmia x crocosmiiflora (Montbretia).